A 270-amino-acid polypeptide reads, in one-letter code: Phosphoserine phosphatase (270 aa).

The active-site Nucleophile is the aspartate 67. Mg(2+) contacts are provided by aspartate 67 and aspartate 69. Aspartate 69 functions as the Proton donor in the catalytic mechanism. Residues glutamate 76, arginine 112, 156 to 157 (SG), and lysine 205 each bind substrate. Aspartate 227 contacts Mg(2+).

The protein belongs to the HAD-like hydrolase superfamily. SerB family. Requires Mg(2+) as cofactor.

The catalysed reaction is O-phospho-L-serine + H2O = L-serine + phosphate. It carries out the reaction O-phospho-D-serine + H2O = D-serine + phosphate. Its pathway is amino-acid biosynthesis; L-serine biosynthesis; L-serine from 3-phospho-D-glycerate: step 3/3. Its function is as follows. Catalyzes the last step in the biosynthesis of serine from carbohydrates. The reaction mechanism proceeds via the formation of a phosphoryl-enzyme intermediates. The sequence is that of Phosphoserine phosphatase (aay) from Drosophila melanogaster (Fruit fly).